The following is a 195-amino-acid chain: Imidazoleglycerol-phosphate dehydratase (195 aa).

It belongs to the imidazoleglycerol-phosphate dehydratase family.

Its subcellular location is the cytoplasm. The enzyme catalyses D-erythro-1-(imidazol-4-yl)glycerol 3-phosphate = 3-(imidazol-4-yl)-2-oxopropyl phosphate + H2O. It participates in amino-acid biosynthesis; L-histidine biosynthesis; L-histidine from 5-phospho-alpha-D-ribose 1-diphosphate: step 6/9. The polypeptide is Imidazoleglycerol-phosphate dehydratase (Polynucleobacter asymbioticus (strain DSM 18221 / CIP 109841 / QLW-P1DMWA-1) (Polynucleobacter necessarius subsp. asymbioticus)).